The primary structure comprises 142 residues: Large ribosomal subunit protein uL13 (142 aa).

The protein belongs to the universal ribosomal protein uL13 family. In terms of assembly, part of the 50S ribosomal subunit.

Its function is as follows. This protein is one of the early assembly proteins of the 50S ribosomal subunit, although it is not seen to bind rRNA by itself. It is important during the early stages of 50S assembly. This Pseudomonas fluorescens (strain Pf0-1) protein is Large ribosomal subunit protein uL13.